The following is a 227-amino-acid chain: MDVFKQMSFKELMKVLGLGTVAFVLGVEWLNWLTRRLRDSRGPLKEVLFFPSPQVCVEHLFTSHRSFPCACPFPHGIQTSFSRLLEHLLSARTSLEMCIFSFSNMEMSRAILLLHKRGVVVRVVTDRDYMTITGSQIGALRKAGISVRHEMSSAVHMHHKFALVDGRKLISGSLNWTLTAVQSNKENVIITEEPELVRPFQQEFLKLWEASDPANLKLQSKNGQIKK.

The Mitochondrial intermembrane portion of the chain corresponds to 1-14 (MDVFKQMSFKELMK). Residues 15 to 33 (VLGLGTVAFVLGVEWLNWL) traverse the membrane as a helical segment. The Cytoplasmic portion of the chain corresponds to 34–227 (TRRLRDSRGP…LQSKNGQIKK (194 aa)). The PLD phosphodiesterase domain occupies 153–180 (SAVHMHHKFALVDGRKLISGSLNWTLTA). Residues His-158, Lys-160, and Asp-165 contribute to the active site.

The protein belongs to the phospholipase D family. MitoPLD/Zucchini subfamily. As to quaternary structure, homodimer.

It localises to the mitochondrion outer membrane. The enzyme catalyses a cardiolipin + H2O = a 1,2-diacyl-sn-glycero-3-phospho-(1'-sn-glycerol) + a 1,2-diacyl-sn-glycero-3-phosphate + H(+). Presents phospholipase and nuclease activities, depending on the different physiological conditions. Plays a key role in mitochondrial fusion and fission via its phospholipase activity. In its phospholipase role, it uses the mitochondrial lipid cardiolipin as substrate to generate phosphatidate (PA or 1,2-diacyl-sn-glycero-3-phosphate), a second messenger signaling lipid. Production of PA facilitates Mitofusin-mediated fusion, whereas the cleavage of PA by the Lipin family of phosphatases produces diacylgycerol (DAG) which promotes mitochondrial fission. Regulates mitochondrial shape through facilitating mitochondrial fusion. During spermatogenesis, plays a critical role in PIWI-interacting RNA (piRNA) biogenesis. piRNAs provide essential protection against the activity of mobile genetic elements. piRNA-mediated transposon silencing is thus critical for maintaining genome stability, in particular in germline cells when transposons are mobilized as a consequence of wide-spread genomic demethylation. Has been shown to be a backbone-non-specific, single strand-specific nuclease, cleaving either RNA or DNA substrates with similar affinity. Produces 5' phosphate and 3' hydroxyl termini, suggesting it could directly participate in the processing of primary piRNA transcripts. Has been proposed to act as a cardiolipin hydrolase to generate phosphatidic acid at mitochondrial surface. Although it cannot be excluded that it can act as a phospholipase in some circumstances, this activity could not be confirmed. The sequence is that of Mitochondrial cardiolipin hydrolase (pld6) from Danio rerio (Zebrafish).